We begin with the raw amino-acid sequence, 100 residues long: Probable antitoxin MazE1 (100 aa).

Residues 77 to 100 (PYESEAERSAARARRNARQQRSAQ) are disordered.

In terms of assembly, forms a complex with cognate toxin MazF1.

Its function is as follows. Probable antitoxin component of a type II toxin-antitoxin (TA) system. Labile antitoxin that binds to cognate MazF1 toxin and counteracts its endoribonuclease activity. The sequence is that of Probable antitoxin MazE1 (mazE1) from Mycobacterium bovis (strain ATCC BAA-935 / AF2122/97).